A 417-amino-acid chain; its full sequence is uncharacterized protein (417 aa).

2 disordered regions span residues 1 to 41 (MDSE…EDQA) and 233 to 262 (QDSAYNDQAPSTSYHHHHHEQLEAGKSTRS). Basic and acidic residues predominate over residues 31 to 41 (DEDHIFHEDQA). Polar residues predominate over residues 235–245 (SAYNDQAPSTS).

This is an uncharacterized protein from Caenorhabditis elegans.